We begin with the raw amino-acid sequence, 351 residues long: Molybdenum import ATP-binding protein ModC (351 aa).

The ABC transporter domain occupies 1-229; the sequence is MLEINIHQQL…DILADWQSET (229 aa). 31-38 provides a ligand contact to ATP; that stretch reads GRSGAGKS. Residues 290 to 351 enclose the Mop domain; the sequence is HSSIRNILNG…IYVQIKSVSL (62 aa).

Belongs to the ABC transporter superfamily. Molybdate importer (TC 3.A.1.8) family. The complex is composed of two ATP-binding proteins (ModC), two transmembrane proteins (ModB) and a solute-binding protein (ModA).

It is found in the cell inner membrane. The catalysed reaction is molybdate(out) + ATP + H2O = molybdate(in) + ADP + phosphate + H(+). Its function is as follows. Part of the ABC transporter complex ModABC involved in molybdenum import. Responsible for energy coupling to the transport system. The chain is Molybdenum import ATP-binding protein ModC from Haemophilus ducreyi (strain 35000HP / ATCC 700724).